A 278-amino-acid polypeptide reads, in one-letter code: Nucleotide-binding protein Tmel_1373 (278 aa).

Position 10 to 17 (10 to 17 (GLSGAGKS)) interacts with ATP. 58–61 (DSRS) serves as a coordination point for GTP.

The protein belongs to the RapZ-like family.

Displays ATPase and GTPase activities. The polypeptide is Nucleotide-binding protein Tmel_1373 (Thermosipho melanesiensis (strain DSM 12029 / CIP 104789 / BI429)).